Consider the following 1486-residue polypeptide: Chromosome partition protein MukB (1486 aa).

Position 34 to 41 (34 to 41 (GGNGAGKS)) interacts with ATP. Coiled coils occupy residues 326–418 (LEAD…QYNQ), 444–480 (LETF…QAYQ), and 509–603 (RHLA…RAPV). The segment at 666–783 (PGGSEDQRLN…EVPLFGRAAR (118 aa)) is flexible hinge. Coiled-coil stretches lie at residues 835–923 (EAEI…AKLE), 977–1115 (EMLS…TAKA), and 1209–1266 (VEAI…QNVS).

The protein belongs to the SMC family. MukB subfamily. Homodimerization via its hinge domain. Binds to DNA via its C-terminal region. Interacts, and probably forms a ternary complex, with MukE and MukF via its C-terminal region. The complex formation is stimulated by calcium or magnesium. Interacts with tubulin-related protein FtsZ.

The protein resides in the cytoplasm. It localises to the nucleoid. Plays a central role in chromosome condensation, segregation and cell cycle progression. Functions as a homodimer, which is essential for chromosome partition. Involved in negative DNA supercoiling in vivo, and by this means organize and compact chromosomes. May achieve or facilitate chromosome segregation by condensation DNA from both sides of a centrally located replisome during cell division. The sequence is that of Chromosome partition protein MukB from Escherichia coli O9:H4 (strain HS).